The sequence spans 231 residues: Putative Nudix hydrolase FPV054 (231 aa).

In terms of domain architecture, Nudix hydrolase spans 74-217 (SKRRSFSEIL…SNEKYEYLHF (144 aa)). The Nudix box motif lies at 125–146 (GRVKNKESIYQCLSRELSEESD). Glutamate 131 provides a ligand contact to Mg(2+). The active-site Nucleophile is the glutamate 140. Mg(2+)-binding residues include glutamate 144 and aspartate 165.

The protein belongs to the Nudix hydrolase family. Requires Mg(2+) as cofactor. The cofactor is Mn(2+).

Decapping enzyme required for the removal of the 5'-end m7GpppN cap tethered to viral and host mRNAs to allow their decay in cells. May therefore accelerate viral and cellular mRNA turnover to eliminate competing host mRNAs and allow stage-specific synthesis of viral proteins. Acceleration of the turnover of cellular transcripts may even promote the shutoff of host protein synthesis. Does not cleave unmethylated RNAs or RNAs shorter than 24 nucleotides. This chain is Putative Nudix hydrolase FPV054, found in Vertebrata (FPV).